The sequence spans 967 residues: MVKTQIKEKKKDEKVTIPLPGKIKTVLAFLVVLAFAAYGFYIRHLTAGKYFSDPDTFYHFEIYKLVLKEGLPRYYPMADAPFGSLIGEPLGLYILPAIFYKIISIFGYNELEAFLLWPPFVGFLSVIGVYLLGRKVLNEWAGMWGAIILSVLTANFSRTFSGNARGDGPFMMLFTFSAVLMLYYLTEENKNKKIIWGTLFVLLAGISTAAWNGSPFGLMVLLGFASFQTIILFIFGKINELREFIKEYYPAYLGILAISYLLTIPGIGKIGGFVRFAFEVFLGLVFLAIVMLYGGKYLNYSDKKHRFAVVAVIVIAGFAGAYIYVGPKLFTLMGGAYQSTQVYETVQELAKTDWGDVKVYYGVEKPNGIVFFLGLVGAMIVTARYLYKLFKDGRRPHEELFAITFYVMSIYLLWTAARFLFLASYAIALMSGVFAGYVLETVEKMKESIPIKAALGGVIAIMLLLIPLTHGPLLAQSAKSMRTTEIETSGWEDALKWLRENTPEYSTATSWWDYGYWIESSLLGQRRASADGGHARDRDHILALFLARDGNISEVDFESWELNYFLVYLNDWAKFNAISYLGGAITRREYNGDESGRGAVTTLLPLPRYGEKYVNLYAKVIVDVSNSSVKVTVGDRECDPLMVTFTPSGKTIKGTGTCSDGNAFPYVLHLTPTIGVLAYYKVATANFIKLAFGVPASTIPGFSDKLFSNFEPVYESGNVIVYRFTPFGIYKIEENINGTWKQVYNLTPGKHELKLYISAFGRDIENATLYIYAINNEKIIEKIKIAEISHMDYLNEYPIAVNVTLPNATSYRFVLVQKGPIGVLLDAPKVNGEIRSPTNILREGESGEIELKVGVDKDYTADLYLRATFIYLVRKSGKDNEDYDAAFEPQMDVFFITKIGENIQLKEGENTVKVRAELPEGVISSYKDELQRKYGDKLIIRGIRVEPVFIAEKEYLMLEVSASAPHH.

The Cytoplasmic segment spans residues 1–21 (MVKTQIKEKKKDEKVTIPLPG). Residues 22 to 42 (KIKTVLAFLVVLAFAAYGFYI) form a helical membrane-spanning segment. The Extracellular segment spans residues 43–112 (RHLTAGKYFS…ISIFGYNELE (70 aa)). Positions 53-55 (DPD) match the DXD motif 1 motif. A Mn(2+)-binding site is contributed by aspartate 55. A helical transmembrane segment spans residues 113 to 133 (AFLLWPPFVGFLSVIGVYLLG). Over 134-135 (RK) the chain is Cytoplasmic. A helical transmembrane segment spans residues 136 to 156 (VLNEWAGMWGAIILSVLTANF). At 157–165 (SRTFSGNAR) the chain is on the extracellular side. Residues arginine 165 and aspartate 167 each coordinate Mn(2+). Residues 165-167 (RGD) carry the DXD motif 2 motif. Residues 166-186 (GDGPFMMLFTFSAVLMLYYLT) form a helical membrane-spanning segment. Over 187 to 193 (EENKNKK) the chain is Cytoplasmic. A helical membrane pass occupies residues 194–214 (IIWGTLFVLLAGISTAAWNGS). Residue proline 215 is a topological domain, extracellular. Residues 216-236 (FGLMVLLGFASFQTIILFIFG) traverse the membrane as a helical segment. Residues 237-247 (KINELREFIKE) are Cytoplasmic-facing. A helical transmembrane segment spans residues 248-268 (YYPAYLGILAISYLLTIPGIG). Position 269 (lysine 269) is a topological domain, extracellular. The helical transmembrane segment at 270–290 (IGGFVRFAFEVFLGLVFLAIV) threads the bilayer. Residues 291-306 (MLYGGKYLNYSDKKHR) are Cytoplasmic-facing. A helical membrane pass occupies residues 307 to 327 (FAVVAVIVIAGFAGAYIYVGP). Residues 328 to 360 (KLFTLMGGAYQSTQVYETVQELAKTDWGDVKVY) lie on the Extracellular side of the membrane. The TIXE motif signature appears at 345–348 (TVQE). A helical membrane pass occupies residues 361 to 381 (YGVEKPNGIVFFLGLVGAMIV). The Cytoplasmic portion of the chain corresponds to 382 to 396 (TARYLYKLFKDGRRP). A helical transmembrane segment spans residues 397 to 417 (HEELFAITFYVMSIYLLWTAA). Position 418 (arginine 418) is a topological domain, extracellular. Arginine 418 contacts a glycophospholipid. A helical membrane pass occupies residues 419–439 (FLFLASYAIALMSGVFAGYVL). The Cytoplasmic segment spans residues 440 to 453 (ETVEKMKESIPIKA). The helical transmembrane segment at 454–474 (ALGGVIAIMLLLIPLTHGPLL) threads the bilayer. Over 475-967 (AQSAKSMRTT…LEVSASAPHH (493 aa)) the chain is Extracellular. Residues 511-513 (WWD) are interacts with target acceptor peptide in protein substrate. The WWDYG motif motif lies at 511–515 (WWDYG). An a glycophospholipid-binding site is contributed by tyrosine 516. The short motif at 571 to 578 (DWAKFNAI) is the DK motif element.

Belongs to the STT3 family. Requires Mn(2+) as cofactor. Mg(2+) serves as cofactor.

It is found in the cell membrane. The enzyme catalyses an archaeal dolichyl phosphooligosaccharide + [protein]-L-asparagine = an archaeal dolichyl phosphate + a glycoprotein with the oligosaccharide chain attached by N-beta-D-glycosyl linkage to a protein L-asparagine.. It functions in the pathway protein modification; protein glycosylation. Functionally, oligosaccharyl transferase (OST) that catalyzes the initial transfer of a defined glycan (ManNAcXyl(2)GlcAMan(2)GalNAc in P.furiosus) from the lipid carrier dolichol-monophosphate to an asparagine residue within an Asn-X-Ser/Thr consensus motif in nascent polypeptide chains, the first step in protein N-glycosylation. The sequence is that of Dolichyl-phosphooligosaccharide-protein glycotransferase 1 (aglB1) from Pyrococcus furiosus (strain ATCC 43587 / DSM 3638 / JCM 8422 / Vc1).